The primary structure comprises 200 residues: Probable E3 ubiquitin-protein ligase ATL45 (200 aa).

The chain crosses the membrane as a helical span at residues 26–46 (MVVILSALLCALVCVAGLAAV). The RING-type; atypical zinc-finger motif lies at 113–155 (CAICITEFSEGEEIRILPLCSHAFHVACIDKWLTSRSSCPSCR).

Belongs to the RING-type zinc finger family. ATL subfamily. As to quaternary structure, interacts with BIK1.

The protein resides in the membrane. It catalyses the reaction S-ubiquitinyl-[E2 ubiquitin-conjugating enzyme]-L-cysteine + [acceptor protein]-L-lysine = [E2 ubiquitin-conjugating enzyme]-L-cysteine + N(6)-ubiquitinyl-[acceptor protein]-L-lysine.. The protein operates within protein modification; protein ubiquitination. Functionally, E3 ubiquitin-protein ligase that possess E3 ubiquitin ligase activity in vitro and mediates protein monoubiquitination. Triggers the monoubiquitination of phosphorylated BIK1 in response to pathogen-associated molecular pattern (PAMP) detection. May be involved in the early steps of the plant defense signaling pathway. The protein is Probable E3 ubiquitin-protein ligase ATL45 of Arabidopsis thaliana (Mouse-ear cress).